The following is a 616-amino-acid chain: Chaperone protein HscA (616 aa).

This sequence belongs to the heat shock protein 70 family.

In terms of biological role, chaperone involved in the maturation of iron-sulfur cluster-containing proteins. Has a low intrinsic ATPase activity which is markedly stimulated by HscB. Involved in the maturation of IscU. The polypeptide is Chaperone protein HscA (Shigella boydii serotype 18 (strain CDC 3083-94 / BS512)).